The following is a 64-amino-acid chain: Thrombin-like enzyme collinein-4 (64 aa).

2 disulfides stabilise this stretch: Cys5/Cys23 and Cys34/Cys51.

As to quaternary structure, monomer. Expressed by the vanom gland.

Its subcellular location is the secreted. Its function is as follows. Thrombin-like snake venom serine protease. This chain is Thrombin-like enzyme collinein-4, found in Crotalus durissus collilineatus (Brazilian rattlesnake).